A 227-amino-acid chain; its full sequence is Cytochrome c oxidase subunit 2 (227 aa).

Over 1-14 (MAHPVQLGLQDATS) the chain is Mitochondrial intermembrane. A helical transmembrane segment spans residues 15–45 (PVMEELITFHDHALMAMSLISLLVLYALFST). The Mitochondrial matrix segment spans residues 46–59 (LTTKLTNTNITDAQ). Residues 60–87 (EMEIIWTILPAIILVLIALPSLRILYLT) form a helical membrane-spanning segment. The Mitochondrial intermembrane segment spans residues 88-227 (DEVNNPSFTI…IFEMGPVFTL (140 aa)). The Cu cation site is built by His-161, Cys-196, Glu-198, Cys-200, His-204, and Met-207. A Mg(2+)-binding site is contributed by Glu-198.

Belongs to the cytochrome c oxidase subunit 2 family. As to quaternary structure, component of the cytochrome c oxidase (complex IV, CIV), a multisubunit enzyme composed of 14 subunits. The complex is composed of a catalytic core of 3 subunits MT-CO1, MT-CO2 and MT-CO3, encoded in the mitochondrial DNA, and 11 supernumerary subunits COX4I, COX5A, COX5B, COX6A, COX6B, COX6C, COX7A, COX7B, COX7C, COX8 and NDUFA4, which are encoded in the nuclear genome. The complex exists as a monomer or a dimer and forms supercomplexes (SCs) in the inner mitochondrial membrane with NADH-ubiquinone oxidoreductase (complex I, CI) and ubiquinol-cytochrome c oxidoreductase (cytochrome b-c1 complex, complex III, CIII), resulting in different assemblies (supercomplex SCI(1)III(2)IV(1) and megacomplex MCI(2)III(2)IV(2)). Found in a complex with TMEM177, COA6, COX18, COX20, SCO1 and SCO2. Interacts with TMEM177 in a COX20-dependent manner. Interacts with COX20. Interacts with COX16. Requires Cu cation as cofactor.

It localises to the mitochondrion inner membrane. It catalyses the reaction 4 Fe(II)-[cytochrome c] + O2 + 8 H(+)(in) = 4 Fe(III)-[cytochrome c] + 2 H2O + 4 H(+)(out). Component of the cytochrome c oxidase, the last enzyme in the mitochondrial electron transport chain which drives oxidative phosphorylation. The respiratory chain contains 3 multisubunit complexes succinate dehydrogenase (complex II, CII), ubiquinol-cytochrome c oxidoreductase (cytochrome b-c1 complex, complex III, CIII) and cytochrome c oxidase (complex IV, CIV), that cooperate to transfer electrons derived from NADH and succinate to molecular oxygen, creating an electrochemical gradient over the inner membrane that drives transmembrane transport and the ATP synthase. Cytochrome c oxidase is the component of the respiratory chain that catalyzes the reduction of oxygen to water. Electrons originating from reduced cytochrome c in the intermembrane space (IMS) are transferred via the dinuclear copper A center (CU(A)) of subunit 2 and heme A of subunit 1 to the active site in subunit 1, a binuclear center (BNC) formed by heme A3 and copper B (CU(B)). The BNC reduces molecular oxygen to 2 water molecules using 4 electrons from cytochrome c in the IMS and 4 protons from the mitochondrial matrix. The polypeptide is Cytochrome c oxidase subunit 2 (MT-CO2) (Cercocebus galeritus (Tana river mangabey)).